Here is a 270-residue protein sequence, read N- to C-terminus: Outer membrane protein P.IIC (270 aa).

Residues 1 to 25 form the signal peptide; sequence MQPAKNLLFSSLLFSSLLFSSAARA. Residues 26–35 are Extracellular-facing; sequence ASEDGGRGPY. The beta stranded transmembrane segment at 36–44 threads the bilayer; that stretch reads VQADLAYAA. Residues 45–76 lie on the Periplasmic side of the membrane; that stretch reads ERITHDYPKPTGTGKNKISTVSDYFRNIRTHS. The chain crosses the membrane as a beta stranded span at residues 77–85; the sequence is VHPRVSVGY. The Extracellular portion of the chain corresponds to 86 to 89; sequence DFGS. A beta stranded membrane pass occupies residues 90–96; sequence WRIAADY. The Periplasmic portion of the chain corresponds to 97-142; sequence ARYRKWNNNKYSVSIKELLRNDNSASGVRGHLNIQTQKTEHQENGT. Residues 143–157 form a beta stranded membrane-spanning segment; it reads FHAVSSLGLSTIYDF. Residues 158–162 are Extracellular-facing; it reads DTGSR. A beta stranded transmembrane segment spans residues 163 to 173; that stretch reads FKPYIGMRVAY. Topologically, residues 174–221 are periplasmic; it reads GHVRHQVRSVEQETEIITTYPSNGGGKVSLSSKMPPKSAHHQSNSIRR. The disordered stretch occupies residues 194-217; that stretch reads PSNGGGKVSLSSKMPPKSAHHQSN. Residues 222 to 234 traverse the membrane as a beta stranded segment; the sequence is VGLGVIAGVGFDI. Topologically, residues 235 to 237 are extracellular; that stretch reads TPN. The chain crosses the membrane as a beta stranded span at residues 238–246; it reads LTLDTGYRY. Residues 247–261 lie on the Periplasmic side of the membrane; it reads HNWGRLENTRFKTHE. A beta stranded membrane pass occupies residues 262–270; that stretch reads ASLGMRYRF.

This sequence belongs to the opacity porin family. As to quaternary structure, homotrimer.

The protein resides in the cell outer membrane. Functionally, this protein serves as a porin. This chain is Outer membrane protein P.IIC (piiC), found in Neisseria gonorrhoeae.